Consider the following 85-residue polypeptide: U4-theraphotoxin-Hhn1d (85 aa).

The N-terminal stretch at 1 to 22 (MKVTLIAILTCAAVLVLHTTAA) is a signal peptide. Positions 23–48 (EELEAESQLMEVGMPDTELAAVDEER) are excised as a propeptide. Intrachain disulfides connect cysteine 52–cysteine 66, cysteine 56–cysteine 77, and cysteine 71–cysteine 82.

The protein belongs to the neurotoxin 12 (Hwtx-2) family. 02 (Hwtx-2) subfamily. As to expression, expressed by the venom gland.

The protein localises to the secreted. In terms of biological role, postsynaptic neurotoxin. The sequence is that of U4-theraphotoxin-Hhn1d from Cyriopagopus hainanus (Chinese bird spider).